Consider the following 488-residue polypeptide: UDP-N-acetylmuramate--L-alanine ligase (488 aa).

122–128 (GTHGKTT) is a binding site for ATP.

It belongs to the MurCDEF family.

The protein resides in the cytoplasm. The catalysed reaction is UDP-N-acetyl-alpha-D-muramate + L-alanine + ATP = UDP-N-acetyl-alpha-D-muramoyl-L-alanine + ADP + phosphate + H(+). It participates in cell wall biogenesis; peptidoglycan biosynthesis. Cell wall formation. The chain is UDP-N-acetylmuramate--L-alanine ligase from Mycobacterium marinum (strain ATCC BAA-535 / M).